We begin with the raw amino-acid sequence, 374 residues long: MANKDYYEVLGLEKGASDDEIKKAFRKLAIKYHPDKNRGNKEAEEKFKEINEAYQVLSDPDKKANYDRFGTADFNGGGGFGDFSGGFGDFGDLGDIFNSFFGGGFSGGSSRARKDAPQRGNDMEYSISLTFEEAVFGVEKSINITRSENCETCGGTGAKKGTSPKTCDKCGGTGTIRVQRNTPLGSFVTQSSCDKCGGRGTIISDPCHECHGAGHVRKKRKISVKIPAGVDTGNVIPLRGQGEHGKNGGPAGDLYISIKVTPHKKFKREGFDIYIDTHISFPKAALGTDMTVPTIDGDVKYTIPAGTQSGTVFRLKGKGVQRVNGGGRGNQYVKVIVDTPKALNDKQREALKMFMEASGEAKSEKKSGFKRFFE.

The J domain maps to 5 to 70 (DYYEVLGLEK…DKKANYDRFG (66 aa)). The CR-type zinc finger occupies 137 to 219 (GVEKSINITR…CHGAGHVRKK (83 aa)). Cys150, Cys153, Cys167, Cys170, Cys193, Cys196, Cys207, and Cys210 together coordinate Zn(2+). 4 CXXCXGXG motif repeats span residues 150-157 (CETCGGTG), 167-174 (CDKCGGTG), 193-200 (CDKCGGRG), and 207-214 (CHECHGAG).

The protein belongs to the DnaJ family. Homodimer. The cofactor is Zn(2+).

The protein resides in the cytoplasm. Participates actively in the response to hyperosmotic and heat shock by preventing the aggregation of stress-denatured proteins and by disaggregating proteins, also in an autonomous, DnaK-independent fashion. Unfolded proteins bind initially to DnaJ; upon interaction with the DnaJ-bound protein, DnaK hydrolyzes its bound ATP, resulting in the formation of a stable complex. GrpE releases ADP from DnaK; ATP binding to DnaK triggers the release of the substrate protein, thus completing the reaction cycle. Several rounds of ATP-dependent interactions between DnaJ, DnaK and GrpE are required for fully efficient folding. Also involved, together with DnaK and GrpE, in the DNA replication of plasmids through activation of initiation proteins. The sequence is that of Chaperone protein DnaJ from Clostridium acetobutylicum (strain ATCC 824 / DSM 792 / JCM 1419 / IAM 19013 / LMG 5710 / NBRC 13948 / NRRL B-527 / VKM B-1787 / 2291 / W).